The sequence spans 280 residues: Cell division protein SepF (280 aa).

Positions Asp-22 to Glu-117 are disordered. Composition is skewed to basic and acidic residues over residues Asp-25–Gly-36 and Arg-53–Arg-83.

It belongs to the SepF family. In terms of assembly, homodimer. Interacts with FtsZ.

It localises to the cytoplasm. In terms of biological role, cell division protein that is part of the divisome complex and is recruited early to the Z-ring. Probably stimulates Z-ring formation, perhaps through the cross-linking of FtsZ protofilaments. Its function overlaps with FtsA. This chain is Cell division protein SepF, found in Nocardia farcinica (strain IFM 10152).